We begin with the raw amino-acid sequence, 426 residues long: UDP-N-acetylglucosamine 1-carboxyvinyltransferase (426 aa).

Position 23–24 (23–24) interacts with phosphoenolpyruvate; the sequence is KN. Residue R99 coordinates UDP-N-acetyl-alpha-D-glucosamine. The active-site Proton donor is D123. D311 and I333 together coordinate UDP-N-acetyl-alpha-D-glucosamine.

This sequence belongs to the EPSP synthase family. MurA subfamily.

The protein resides in the cytoplasm. It carries out the reaction phosphoenolpyruvate + UDP-N-acetyl-alpha-D-glucosamine = UDP-N-acetyl-3-O-(1-carboxyvinyl)-alpha-D-glucosamine + phosphate. The protein operates within cell wall biogenesis; peptidoglycan biosynthesis. In terms of biological role, cell wall formation. Adds enolpyruvyl to UDP-N-acetylglucosamine. This is UDP-N-acetylglucosamine 1-carboxyvinyltransferase from Nocardia farcinica (strain IFM 10152).